Consider the following 262-residue polypeptide: Ribosome biogenesis GTPase A (262 aa).

In terms of domain architecture, CP-type G spans 12 to 157 (KRQIKDLLRL…ILDTPGILYK (146 aa)). GTP-binding positions include 54–57 (NKVD), 109–114 (NTGKST), and G153.

It belongs to the TRAFAC class YlqF/YawG GTPase family. MTG1 subfamily.

Its subcellular location is the cytoplasm. Its function is as follows. Required for a late step of 50S ribosomal subunit assembly. Has GTPase activity. Binds to the 23S rRNA. In Thermotoga maritima (strain ATCC 43589 / DSM 3109 / JCM 10099 / NBRC 100826 / MSB8), this protein is Ribosome biogenesis GTPase A.